The sequence spans 45 residues: Photosystem II reaction center protein K (45 aa).

The propeptide occupies 1 to 8; it reads MEAVFLLA. The helical transmembrane segment at 24–44 threads the bilayer; sequence LPVIPVFFLALAFVWQAAVGF.

It belongs to the PsbK family. As to quaternary structure, PSII is composed of 1 copy each of membrane proteins PsbA, PsbB, PsbC, PsbD, PsbE, PsbF, PsbH, PsbI, PsbJ, PsbK, PsbL, PsbM, PsbT, PsbX, PsbY, PsbZ, Psb30/Ycf12, peripheral proteins PsbO, CyanoQ (PsbQ), PsbU, PsbV and a large number of cofactors. It forms dimeric complexes.

The protein localises to the cellular thylakoid membrane. One of the components of the core complex of photosystem II (PSII). PSII is a light-driven water:plastoquinone oxidoreductase that uses light energy to abstract electrons from H(2)O, generating O(2) and a proton gradient subsequently used for ATP formation. It consists of a core antenna complex that captures photons, and an electron transfer chain that converts photonic excitation into a charge separation. The chain is Photosystem II reaction center protein K from Crocosphaera subtropica (strain ATCC 51142 / BH68) (Cyanothece sp. (strain ATCC 51142)).